A 293-amino-acid polypeptide reads, in one-letter code: Acetylglutamate kinase (293 aa).

Substrate is bound by residues 68–69, arginine 90, and asparagine 189; that span reads GG.

The protein belongs to the acetylglutamate kinase family. ArgB subfamily.

The protein localises to the cytoplasm. It catalyses the reaction N-acetyl-L-glutamate + ATP = N-acetyl-L-glutamyl 5-phosphate + ADP. The protein operates within amino-acid biosynthesis; L-arginine biosynthesis; N(2)-acetyl-L-ornithine from L-glutamate: step 2/4. Catalyzes the ATP-dependent phosphorylation of N-acetyl-L-glutamate. The sequence is that of Acetylglutamate kinase from Caldicellulosiruptor saccharolyticus (strain ATCC 43494 / DSM 8903 / Tp8T 6331).